Reading from the N-terminus, the 148-residue chain is Lysozyme C, milk isozyme (148 aa).

A signal peptide spans 1 to 18 (MKALLIVGLLLLSVAVQG). In terms of domain architecture, C-type lysozyme spans 19–148 (KKFQRCELAR…LRSYVQGCRV (130 aa)). 4 disulfide bridges follow: cysteine 24/cysteine 146, cysteine 48/cysteine 134, cysteine 83/cysteine 99, and cysteine 95/cysteine 113. Active-site residues include glutamate 53 and aspartate 71.

It belongs to the glycosyl hydrolase 22 family.

The enzyme catalyses Hydrolysis of (1-&gt;4)-beta-linkages between N-acetylmuramic acid and N-acetyl-D-glucosamine residues in a peptidoglycan and between N-acetyl-D-glucosamine residues in chitodextrins.. Lysozymes have primarily a bacteriolytic function; those in tissues and body fluids are associated with the monocyte-macrophage system and enhance the activity of immunoagents. The protein is Lysozyme C, milk isozyme of Bos taurus (Bovine).